Here is a 389-residue protein sequence, read N- to C-terminus: Alanine racemase TOXG (389 aa).

Position 235 is an N6-(pyridoxal phosphate)lysine (Lys235).

This sequence belongs to the threonine aldolase family. Pyridoxal 5'-phosphate serves as cofactor.

The catalysed reaction is L-alanine = D-alanine. It participates in mycotoxin biosynthesis; HC-toxin biosynthesis. Functionally, alanine racemase, part of the diffuse TOX2 gene cluster that mediates the biosynthesis of the HC-toxin, cyclic tetrapeptide of structure cyclo(D-Pro-L-Ala-D-Ala-L-Aeo), where Aeo stands for 2-amino-9,10-epoxi-8-oxodecanoic acid. HC-toxin is a determinant of specificity and virulence in the interaction between the producing fungus and its host, maize. TOXG catalyzes the conversion of L-alanine into D-alanine, an essential precursor for the production of the major forms of HC-toxin by the non-ribosomal peptide synthetase HTS1. The sequence is that of Alanine racemase TOXG from Cochliobolus carbonum (Maize leaf spot fungus).